The following is a 228-amino-acid chain: Adapter protein MecA (228 aa).

Residues 79 to 98 (GQKNDDSAADQTDDEGTDTQ) are disordered. Residues 85–95 (SAADQTDDEGT) show a composition bias toward acidic residues.

The protein belongs to the MecA family. Homodimer.

Enables the recognition and targeting of unfolded and aggregated proteins to the ClpC protease or to other proteins involved in proteolysis. The polypeptide is Adapter protein MecA (Lacticaseibacillus casei (strain BL23) (Lactobacillus casei)).